A 160-amino-acid chain; its full sequence is S-ribosylhomocysteine lyase (160 aa).

3 residues coordinate Fe cation: His57, His61, and Cys127.

It belongs to the LuxS family. In terms of assembly, homodimer. Fe cation serves as cofactor.

It catalyses the reaction S-(5-deoxy-D-ribos-5-yl)-L-homocysteine = (S)-4,5-dihydroxypentane-2,3-dione + L-homocysteine. Its function is as follows. Involved in the synthesis of autoinducer 2 (AI-2) which is secreted by bacteria and is used to communicate both the cell density and the metabolic potential of the environment. The regulation of gene expression in response to changes in cell density is called quorum sensing. Catalyzes the transformation of S-ribosylhomocysteine (RHC) to homocysteine (HC) and 4,5-dihydroxy-2,3-pentadione (DPD). This Streptococcus uberis (strain ATCC BAA-854 / 0140J) protein is S-ribosylhomocysteine lyase.